The primary structure comprises 197 residues: Signal peptidase complex catalytic subunit SEC11 (197 aa).

Residues 1 to 14 lie on the Cytoplasmic side of the membrane; it reads MLSSLAPYMANPRQ. Residues 15–33 form a helical; Signal-anchor for type II membrane protein membrane-spanning segment; sequence TLTQVLNFALVLSTAFMLW. Residues 34-197 are Lumenal-facing; it reads KGLSVVTNST…MGLMVVLQRE (164 aa). N41 carries an N-linked (GlcNAc...) asparagine glycan. Residues S53 and H92 each act as charge relay system in the active site. The segment covering 102-115 has biased composition (basic and acidic residues); that stretch reads PGREDKKSVKKGGE. The disordered stretch occupies residues 102–134; that stretch reads PGREDKKSVKKGGEEGEETSSTPSQKLLTKGDN. Catalysis depends on D139, which acts as the Charge relay system. A C-terminal short (CTS) helix region spans residues 183–194; the sequence is VLLGFMGLMVVL.

The protein belongs to the peptidase S26B family. Component of the signal peptidase complex (SPC) composed of a catalytic subunit SEC11 and three accessory subunits SPC1, SPC2 and SPC3. The complex induces a local thinning of the ER membrane which is used to measure the length of the signal peptide (SP) h-region of protein substrates. This ensures the selectivity of the complex towards h-regions shorter than 18-20 amino acids. SPC associates with the translocon complex.

The protein localises to the endoplasmic reticulum membrane. It catalyses the reaction Cleavage of hydrophobic, N-terminal signal or leader sequences from secreted and periplasmic proteins.. Its function is as follows. Catalytic component of the signal peptidase complex (SPC) which catalyzes the cleavage of N-terminal signal sequences from nascent proteins as they are translocated into the lumen of the endoplasmic reticulum. Specifically cleaves N-terminal signal peptides that contain a hydrophobic alpha-helix (h-region) shorter than 18-20 amino acids. In Paracoccidioides lutzii (strain ATCC MYA-826 / Pb01) (Paracoccidioides brasiliensis), this protein is Signal peptidase complex catalytic subunit SEC11 (SEC11).